A 248-amino-acid chain; its full sequence is Ubiquinone biosynthesis O-methyltransferase (248 aa).

S-adenosyl-L-methionine contacts are provided by R40, G71, D92, and M135.

It belongs to the methyltransferase superfamily. UbiG/COQ3 family.

The catalysed reaction is a 3-demethylubiquinol + S-adenosyl-L-methionine = a ubiquinol + S-adenosyl-L-homocysteine + H(+). It catalyses the reaction a 3-(all-trans-polyprenyl)benzene-1,2-diol + S-adenosyl-L-methionine = a 2-methoxy-6-(all-trans-polyprenyl)phenol + S-adenosyl-L-homocysteine + H(+). Its pathway is cofactor biosynthesis; ubiquinone biosynthesis. In terms of biological role, O-methyltransferase that catalyzes the 2 O-methylation steps in the ubiquinone biosynthetic pathway. The polypeptide is Ubiquinone biosynthesis O-methyltransferase (Ruegeria pomeroyi (strain ATCC 700808 / DSM 15171 / DSS-3) (Silicibacter pomeroyi)).